Reading from the N-terminus, the 318-residue chain is RNA polymerase II transcription factor B subunit 3 (318 aa).

The segment at Cys13–Cys54 adopts an RING-type zinc-finger fold.

In terms of assembly, one of the nine subunits forming the core-TFIIH basal transcription factor. Also interacts with skp1 and with the mcs2-mcs6 complex.

Its subcellular location is the cytoplasm. The protein localises to the nucleus. Functionally, acts as a component of the general transcription and DNA repair factor IIH (TFIIH or factor B), which is essential for both basal and activated transcription, and is involved in nucleotide excision repair (NER) of damaged DNA. TFIIH has CTD kinase activity and DNA-dependent ATPase activity, and is essential for polymerase II transcription. This Schizosaccharomyces pombe (strain 972 / ATCC 24843) (Fission yeast) protein is RNA polymerase II transcription factor B subunit 3 (pmh1).